Reading from the N-terminus, the 341-residue chain is Adenosine deaminase (341 aa).

Positions 15 and 17 each coordinate Zn(2+). Substrate is bound by residues His17, Asp19, and Gly172. Zn(2+) is bound at residue His199. Catalysis depends on Glu202, which acts as the Proton donor. Asp279 is a binding site for Zn(2+).

Belongs to the metallo-dependent hydrolases superfamily. Adenosine and AMP deaminases family. Adenosine deaminase subfamily. It depends on Zn(2+) as a cofactor.

It catalyses the reaction adenosine + H2O + H(+) = inosine + NH4(+). The catalysed reaction is 2'-deoxyadenosine + H2O + H(+) = 2'-deoxyinosine + NH4(+). Catalyzes the hydrolytic deamination of adenosine and 2-deoxyadenosine. The sequence is that of Adenosine deaminase from Streptococcus equi subsp. zooepidemicus (strain MGCS10565).